The chain runs to 486 residues: Ribulose bisphosphate carboxylase large chain (486 aa).

Positions 125 and 175 each coordinate substrate. The Proton acceptor role is filled by lysine 177. Lysine 179 is a substrate binding site. Positions 203, 205, and 206 each coordinate Mg(2+). At lysine 203 the chain carries N6-carboxylysine. The active-site Proton acceptor is the histidine 295. 3 residues coordinate substrate: arginine 296, histidine 328, and serine 380.

The protein belongs to the RuBisCO large chain family. Type I subfamily. Heterohexadecamer of 8 large chains and 8 small chains. Mg(2+) is required as a cofactor.

It carries out the reaction 2 (2R)-3-phosphoglycerate + 2 H(+) = D-ribulose 1,5-bisphosphate + CO2 + H2O. The catalysed reaction is D-ribulose 1,5-bisphosphate + O2 = 2-phosphoglycolate + (2R)-3-phosphoglycerate + 2 H(+). Functionally, ruBisCO catalyzes two reactions: the carboxylation of D-ribulose 1,5-bisphosphate, the primary event in carbon dioxide fixation, as well as the oxidative fragmentation of the pentose substrate. Both reactions occur simultaneously and in competition at the same active site. The chain is Ribulose bisphosphate carboxylase large chain from Aurantimonas manganoxydans (strain ATCC BAA-1229 / DSM 21871 / SI85-9A1).